The chain runs to 273 residues: 2-dehydro-3-deoxyphosphooctonate aldolase (273 aa).

It belongs to the KdsA family.

It is found in the cytoplasm. The enzyme catalyses D-arabinose 5-phosphate + phosphoenolpyruvate + H2O = 3-deoxy-alpha-D-manno-2-octulosonate-8-phosphate + phosphate. The protein operates within carbohydrate biosynthesis; 3-deoxy-D-manno-octulosonate biosynthesis; 3-deoxy-D-manno-octulosonate from D-ribulose 5-phosphate: step 2/3. Its pathway is bacterial outer membrane biogenesis; lipopolysaccharide biosynthesis. This is 2-dehydro-3-deoxyphosphooctonate aldolase from Desulfatibacillum aliphaticivorans.